The sequence spans 429 residues: Adenosylhomocysteinase (429 aa).

Substrate contacts are provided by threonine 64, aspartate 136, and glutamate 161. NAD(+) is bound at residue 162–164 (TTT). Residues lysine 191 and aspartate 195 each coordinate substrate. NAD(+) contacts are provided by residues asparagine 196, 225-230 (GYGWCG), glutamate 248, asparagine 283, 304-306 (SGH), and asparagine 351.

This sequence belongs to the adenosylhomocysteinase family. It depends on NAD(+) as a cofactor.

It localises to the cytoplasm. The catalysed reaction is S-adenosyl-L-homocysteine + H2O = L-homocysteine + adenosine. It functions in the pathway amino-acid biosynthesis; L-homocysteine biosynthesis; L-homocysteine from S-adenosyl-L-homocysteine: step 1/1. May play a key role in the regulation of the intracellular concentration of adenosylhomocysteine. In Thermosynechococcus vestitus (strain NIES-2133 / IAM M-273 / BP-1), this protein is Adenosylhomocysteinase.